A 156-amino-acid polypeptide reads, in one-letter code: 6,7-dimethyl-8-ribityllumazine synthase (156 aa).

5-amino-6-(D-ribitylamino)uracil contacts are provided by residues Phe-28, 62–64 (ALE), and 86–88 (AVI). A (2S)-2-hydroxy-3-oxobutyl phosphate-binding site is contributed by 91-92 (ET). His-94 functions as the Proton donor in the catalytic mechanism. A 5-amino-6-(D-ribitylamino)uracil-binding site is contributed by Asn-119. (2S)-2-hydroxy-3-oxobutyl phosphate is bound at residue Arg-133.

Belongs to the DMRL synthase family.

The enzyme catalyses (2S)-2-hydroxy-3-oxobutyl phosphate + 5-amino-6-(D-ribitylamino)uracil = 6,7-dimethyl-8-(1-D-ribityl)lumazine + phosphate + 2 H2O + H(+). Its pathway is cofactor biosynthesis; riboflavin biosynthesis; riboflavin from 2-hydroxy-3-oxobutyl phosphate and 5-amino-6-(D-ribitylamino)uracil: step 1/2. Its function is as follows. Catalyzes the formation of 6,7-dimethyl-8-ribityllumazine by condensation of 5-amino-6-(D-ribitylamino)uracil with 3,4-dihydroxy-2-butanone 4-phosphate. This is the penultimate step in the biosynthesis of riboflavin. This Azoarcus sp. (strain BH72) protein is 6,7-dimethyl-8-ribityllumazine synthase.